Reading from the N-terminus, the 274-residue chain is 2,3,4,5-tetrahydropyridine-2,6-dicarboxylate N-succinyltransferase (274 aa).

2 residues coordinate substrate: Arg-104 and Asp-141.

This sequence belongs to the transferase hexapeptide repeat family. Homotrimer.

Its subcellular location is the cytoplasm. The enzyme catalyses (S)-2,3,4,5-tetrahydrodipicolinate + succinyl-CoA + H2O = (S)-2-succinylamino-6-oxoheptanedioate + CoA. It participates in amino-acid biosynthesis; L-lysine biosynthesis via DAP pathway; LL-2,6-diaminopimelate from (S)-tetrahydrodipicolinate (succinylase route): step 1/3. The sequence is that of 2,3,4,5-tetrahydropyridine-2,6-dicarboxylate N-succinyltransferase from Yersinia pestis.